A 368-amino-acid chain; its full sequence is Agmatine deiminase (368 aa).

The active-site Amidino-cysteine intermediate is C357.

This sequence belongs to the agmatine deiminase family. Homodimer.

The catalysed reaction is agmatine + H2O = N-carbamoylputrescine + NH4(+). Its pathway is amine and polyamine biosynthesis; putrescine biosynthesis via agmatine pathway; N-carbamoylputrescine from agmatine: step 1/1. In terms of biological role, mediates the hydrolysis of agmatine into N-carbamoylputrescine in the arginine decarboxylase (ADC) pathway of putrescine biosynthesis, a basic polyamine. The chain is Agmatine deiminase from Pseudomonas aeruginosa (strain LESB58).